The sequence spans 139 residues: Antitoxin HicB 2 (139 aa).

The HTH cro/C1-type domain maps to 87-137 (MLQTRTSNAELARLLGTRPQEIQRIVSLSHSTKIDTIANALNALGKHLELV). Residues 96–113 (ELARLLGTRPQEIQRIVS) constitute a DNA-binding region (H-T-H motif).

Belongs to the HicB antitoxin family. In terms of assembly, probably forms a complex with the probable mRNA interferase HicA2 (its cognate toxin); when complexed with HicA inhibits the toxin activity.

Antitoxin component of a type II toxin-antitoxin (TA) system. Functions as an mRNA interferase antitoxin preventing effects of the HicA 2 toxin. This is Antitoxin HicB 2 (hicB2) from Photorhabdus laumondii subsp. laumondii (strain DSM 15139 / CIP 105565 / TT01) (Photorhabdus luminescens subsp. laumondii).